The following is a 384-amino-acid chain: Queuine tRNA-ribosyltransferase (384 aa).

The active-site Proton acceptor is the Asp92. Substrate contacts are provided by residues Asp92–Phe96, Asp146, Gln190, and Gly217. The RNA binding stretch occupies residues Gly248–Asp254. Asp267 acts as the Nucleophile in catalysis. Residues Thr272–Arg276 form an RNA binding; important for wobble base 34 recognition region. Zn(2+)-binding residues include Cys305, Cys307, Cys310, and His337.

Belongs to the queuine tRNA-ribosyltransferase family. In terms of assembly, homodimer. Within each dimer, one monomer is responsible for RNA recognition and catalysis, while the other monomer binds to the replacement base PreQ1. Requires Zn(2+) as cofactor.

The enzyme catalyses 7-aminomethyl-7-carbaguanine + guanosine(34) in tRNA = 7-aminomethyl-7-carbaguanosine(34) in tRNA + guanine. It participates in tRNA modification; tRNA-queuosine biosynthesis. Catalyzes the base-exchange of a guanine (G) residue with the queuine precursor 7-aminomethyl-7-deazaguanine (PreQ1) at position 34 (anticodon wobble position) in tRNAs with GU(N) anticodons (tRNA-Asp, -Asn, -His and -Tyr). Catalysis occurs through a double-displacement mechanism. The nucleophile active site attacks the C1' of nucleotide 34 to detach the guanine base from the RNA, forming a covalent enzyme-RNA intermediate. The proton acceptor active site deprotonates the incoming PreQ1, allowing a nucleophilic attack on the C1' of the ribose to form the product. After dissociation, two additional enzymatic reactions on the tRNA convert PreQ1 to queuine (Q), resulting in the hypermodified nucleoside queuosine (7-(((4,5-cis-dihydroxy-2-cyclopenten-1-yl)amino)methyl)-7-deazaguanosine). In Xylella fastidiosa (strain 9a5c), this protein is Queuine tRNA-ribosyltransferase.